A 776-amino-acid polypeptide reads, in one-letter code: Endonuclease MutS2 (776 aa).

330–337 (GPNTGGKT) provides a ligand contact to ATP. Positions 701-776 (LDLRGMRYEE…GSGATIAILK (76 aa)) constitute a Smr domain.

It belongs to the DNA mismatch repair MutS family. MutS2 subfamily. Homodimer. Binds to stalled ribosomes, contacting rRNA.

Its function is as follows. Endonuclease that is involved in the suppression of homologous recombination and thus may have a key role in the control of bacterial genetic diversity. Acts as a ribosome collision sensor, splitting the ribosome into its 2 subunits. Detects stalled/collided 70S ribosomes which it binds and splits by an ATP-hydrolysis driven conformational change. Acts upstream of the ribosome quality control system (RQC), a ribosome-associated complex that mediates the extraction of incompletely synthesized nascent chains from stalled ribosomes and their subsequent degradation. Probably generates substrates for RQC. The sequence is that of Endonuclease MutS2 from Lactococcus lactis subsp. lactis (strain IL1403) (Streptococcus lactis).